Here is a 545-residue protein sequence, read N- to C-terminus: CTP synthase (545 aa).

The tract at residues Met1 to Leu266 is amidoligase domain. A CTP-binding site is contributed by Ser14. Position 14 (Ser14) interacts with UTP. ATP is bound by residues Ser15–Ile20 and Asp72. Residues Asp72 and Glu140 each contribute to the Mg(2+) site. CTP-binding positions include Asp147–Glu149, Lys187–Gln192, and Lys223. UTP contacts are provided by residues Lys187–Gln192 and Lys223. An ATP-binding site is contributed by Lys239 to Val241. The 252-residue stretch at Thr291 to Lys542 folds into the Glutamine amidotransferase type-1 domain. Gly352 contributes to the L-glutamine binding site. Catalysis depends on Cys379, which acts as the Nucleophile; for glutamine hydrolysis. L-glutamine contacts are provided by residues Leu380–Gln383, Glu403, and Arg470. Catalysis depends on residues His515 and Glu517.

The protein belongs to the CTP synthase family. As to quaternary structure, homotetramer.

It catalyses the reaction UTP + L-glutamine + ATP + H2O = CTP + L-glutamate + ADP + phosphate + 2 H(+). The catalysed reaction is L-glutamine + H2O = L-glutamate + NH4(+). It carries out the reaction UTP + NH4(+) + ATP = CTP + ADP + phosphate + 2 H(+). The protein operates within pyrimidine metabolism; CTP biosynthesis via de novo pathway; CTP from UDP: step 2/2. With respect to regulation, allosterically activated by GTP, when glutamine is the substrate; GTP has no effect on the reaction when ammonia is the substrate. The allosteric effector GTP functions by stabilizing the protein conformation that binds the tetrahedral intermediate(s) formed during glutamine hydrolysis. Inhibited by the product CTP, via allosteric rather than competitive inhibition. Functionally, catalyzes the ATP-dependent amination of UTP to CTP with either L-glutamine or ammonia as the source of nitrogen. Regulates intracellular CTP levels through interactions with the four ribonucleotide triphosphates. This is CTP synthase from Haemophilus influenzae (strain PittGG).